The following is a 523-amino-acid chain: MNNIHNHKILILDFGSQYTQLIARRVREIGVYCELWAWDVTEQQIREFNPTGIILSGGPESTTEDNSPRAPEYVFNAGVPVLGICYGMQTMAMQLGGLTEPSSHREFGYASVSLENSTALFAQLNDDLNSSLPKLDVWMSHGDKVTRLPEGFQLTGTTSTCPIAAMSDESRHFYGVQFHPEVTHTKSGLALLTNFVVNICGCTTNWTPENIIEDAVARIKAQVGDDEVILGLSGGVDSSVTALLLHRAIGKNLHCVFVDNGLLRLNEGDQVMEMFGDKFGLNIIRVNAEDRFLDALKGIDEPESKRKMIGKVFVDVFDEESHKQTSVKWLAQGTIYPDVIESAASKTGKAHVIKSHHNVGGLPDYMKLGLVEPLRELFKDEVRKIGLALGLPAEMLNRHPFPGPGLGVRVLGEIKKEYCDLLRKADAIFIEELYNSGWYYKVSQAFTVFLPVKSVGVMGDGRKYDWVVSLRAVETIDFMTAHWAHLPYDLLGKISNRIINEVDGISRVVYDVSGKPPATIEWE.

The Glutamine amidotransferase type-1 domain occupies 8-205 (KILILDFGSQ…VVNICGCTTN (198 aa)). The Nucleophile role is filled by C85. Active-site residues include H179 and E181. Residues 206-398 (WTPENIIEDA…LGLPAEMLNR (193 aa)) enclose the GMPS ATP-PPase domain. 233-239 (SGGVDSS) is an ATP binding site.

In terms of assembly, homodimer.

The enzyme catalyses XMP + L-glutamine + ATP + H2O = GMP + L-glutamate + AMP + diphosphate + 2 H(+). It participates in purine metabolism; GMP biosynthesis; GMP from XMP (L-Gln route): step 1/1. Its function is as follows. Catalyzes the synthesis of GMP from XMP. The chain is GMP synthase [glutamine-hydrolyzing] from Mannheimia succiniciproducens (strain KCTC 0769BP / MBEL55E).